The primary structure comprises 432 residues: Succinate--CoA ligase [GDP-forming] subunit beta, mitochondrial (432 aa).

Residues 1-37 (MAAPVGAQARKLLRDLVLRPPLLAARSQVVQLTSRRW) constitute a mitochondrion transit peptide. In terms of domain architecture, ATP-grasp spans 46–274 (KKLMSDNGVK…NAEFRQKDIF (229 aa)). Glutamine 57 serves as a coordination point for GTP. At lysine 73 the chain carries N6-acetyllysine. At lysine 78 the chain carries N6-succinyllysine. 90 to 92 (GRG) provides a ligand contact to GTP. N6-acetyllysine is present on residues lysine 111, lysine 132, and lysine 139. Position 146 (leucine 146) interacts with GTP. Serine 161 bears the Phosphoserine mark. An N6-acetyllysine mark is found at lysine 200, lysine 218, and lysine 227. 2 residues coordinate Mg(2+): asparagine 243 and aspartate 257. An N6-acetyllysine modification is found at lysine 271. Asparagine 308 is a binding site for substrate. Lysine 338 is subject to N6-succinyllysine. An N6-acetyllysine modification is found at lysine 347. 365 to 367 (GIV) contributes to the substrate binding site. N6-acetyllysine occurs at positions 386 and 423.

The protein belongs to the succinate/malate CoA ligase beta subunit family. GTP-specific subunit beta subfamily. In terms of assembly, heterodimer of an alpha and a beta subunit. The beta subunit determines specificity for GTP. It depends on Mg(2+) as a cofactor.

Its subcellular location is the mitochondrion. It catalyses the reaction GTP + succinate + CoA = succinyl-CoA + GDP + phosphate. Its pathway is carbohydrate metabolism; tricarboxylic acid cycle; succinate from succinyl-CoA (ligase route): step 1/1. GTP-specific succinyl-CoA synthetase functions in the citric acid cycle (TCA), coupling the hydrolysis of succinyl-CoA to the synthesis of GTP and thus represents the only step of substrate-level phosphorylation in the TCA. The beta subunit provides nucleotide specificity of the enzyme and binds the substrate succinate, while the binding sites for coenzyme A and phosphate are found in the alpha subunit. This Bos taurus (Bovine) protein is Succinate--CoA ligase [GDP-forming] subunit beta, mitochondrial.